Here is a 956-residue protein sequence, read N- to C-terminus: Plasma membrane ATPase 1 (956 aa).

Topologically, residues 1–65 are cytoplasmic; sequence MAEKPEVLDA…EKKESKFLKF (65 aa). Residues 66–85 form a helical membrane-spanning segment; the sequence is LGFMWNPLSWVMEAAAIMAI. Topologically, residues 86–97 are extracellular; sequence ALANGGGKPPDW. The chain crosses the membrane as a helical span at residues 98–118; that stretch reads QDFVGIITLLIINSTISFIEE. Residues 119-247 lie on the Cytoplasmic side of the membrane; it reads NNAGNAAAAL…GHFQKVLTAI (129 aa). A helical membrane pass occupies residues 248 to 268; that stretch reads GNFCICSIAVGMIIEIIVMYP. Topologically, residues 269–277 are extracellular; that stretch reads IQHRKYRPG. Residues 278–295 traverse the membrane as a helical segment; that stretch reads IDNLLVLLIGGIPIAMPT. At 296-646 the chain is on the cytoplasmic side; it reads VLSVTMAIGS…LTSRAIFQRM (351 aa). The 4-aspartylphosphate intermediate role is filled by Asp-333. Residues Asp-592 and Asp-596 each contribute to the Mg(2+) site. Residues 647–666 form a helical membrane-spanning segment; that stretch reads KNYTIYAVSITIRIVLGFML. The Extracellular portion of the chain corresponds to 667 to 674; that stretch reads LALIWKFD. Residues 675–697 traverse the membrane as a helical segment; that stretch reads FPPFMVLIIAILNDGTIMTISKD. The Cytoplasmic portion of the chain corresponds to 698–713; the sequence is RVKPSPLPDSWKLAEI. Residues 714-734 traverse the membrane as a helical segment; it reads FTTGVVLGGYLAMMTVIFFWA. Residues 735–759 are Extracellular-facing; the sequence is AYKTNFFPRIFGVSTLEKTATDDFR. A helical transmembrane segment spans residues 760 to 780; that stretch reads KLASAIYLQVSTISQALIFVT. Residues 781 to 792 are Cytoplasmic-facing; that stretch reads RSRSWSFVERPG. A helical transmembrane segment spans residues 793 to 813; that stretch reads LLLVFAFFVAQLVATLIAVYA. Residues 814 to 821 lie on the Extracellular side of the membrane; the sequence is NWSFAAIE. Residues 822–842 traverse the membrane as a helical segment; the sequence is GIGWGWAGVIWLYNIVTYIPL. Over 843-956 the chain is Cytoplasmic; the sequence is DLIKFLIRYA…IETIQQSYTV (114 aa).

The protein belongs to the cation transport ATPase (P-type) (TC 3.A.3) family. Type IIIA subfamily. Possibly exists as a homodimer or a homotrimer.

The protein localises to the cell membrane. It catalyses the reaction ATP + H2O + H(+)(in) = ADP + phosphate + 2 H(+)(out). Functionally, the plasma membrane ATPase of plants and fungi is a hydrogen ion pump. The proton gradient it generates drives the active transport of nutrients by H(+)-symport. The resulting external acidification and/or internal alkinization may mediate growth responses. The polypeptide is Plasma membrane ATPase 1 (LHA1) (Solanum lycopersicum (Tomato)).